The following is a 2517-amino-acid chain: Cullin-9 (2517 aa).

A Glycyl lysine isopeptide (Lys-Gly) (interchain with G-Cter in ubiquitin) cross-link involves residue Lys87. The segment covering 276 to 288 (SPELGAGDQSSPC) has biased composition (polar residues). Residues 276-296 (SPELGAGDQSSPCATREKSRG) form a disordered region. The region spanning 366 to 439 (RSEFSSRSGY…HWHMLEILGP (74 aa)) is the CPH domain. The span at 576–589 (SNEPSSSSTSRNHS) shows a compositional bias: low complexity. Residues 576–639 (SNEPSSSSTS…TETPMAQSDS (64 aa)) are disordered. Residues 593 to 609 (DPEEESKSEASFSEEET) show a composition bias toward acidic residues. Basic and acidic residues predominate over residues 610–630 (ESLKAKAEAPKTEAEPTKTRT). Phosphoserine is present on Ser976. The region spanning 1143 to 1322 (PINIPFFDVF…RTCLFYTIRA (180 aa)) is the DOC domain. 1363 to 1370 (AAQALGKT) is a binding site for ATP. Disordered regions lie at residues 1432–1466 (VEPP…VLPS) and 1664–1685 (DEEE…AEKE). The segment covering 1433-1443 (EPPPGPSPEPS) has biased composition (pro residues). Ser1457 carries the phosphoserine modification. The stretch at 1649-1691 (LFQLQRLDKLFLEQEDEEEKRLEEEEEEEEEEEAEKELFIEDP) forms a coiled coil. Acidic residues predominate over residues 1664 to 1683 (DEEEKRLEEEEEEEEEEEAE). Lys1881 is covalently cross-linked (Glycyl lysine isopeptide (Lys-Gly) (interchain with G-Cter in NEDD8)). The tract at residues 2066 to 2283 (RPDHCPVCVS…KDYYNCSAMV (218 aa)) is TRIAD supradomain. The Zn(2+) site is built by Cys2070, Cys2073, Cys2088, His2090, Cys2093, Cys2096, Cys2115, Cys2120, Cys2160, Cys2166, Cys2181, Cys2184, Cys2189, Cys2192, His2198, Cys2203, Cys2236, and Cys2239. Residues 2070–2120 (CPVCVSPLGCDDDLPSLCCMHYCCKSCWNEYLTTRIEQNLVLNCTCPIADC) form an RING-type 1 zinc finger. The IBR-type zinc finger occupies 2140–2203 (SKYEKALLRG…FPEAHYPASC (64 aa)). An RING-type 2; atypical zinc finger spans residues 2236–2265 (CPSCQAPIEKNEGCLHMTCAKCNHGFCWRC). Cys2249 is an active-site residue. Cys2254, Cys2257, Cys2262, Cys2265, His2273, and Cys2279 together coordinate Zn(2+). Positions 2365–2385 (VEQQTENLELHTNALQILLEE) form a coiled coil. At Ser2436 the chain carries Phosphoserine. The segment at 2442–2517 (WEAKGPNMPG…EEEDEDEAYD (76 aa)) is disordered. Acidic residues-rich tracts occupy residues 2461-2499 (EAEE…ENLD) and 2506-2517 (GDEEEDEDEAYD).

It belongs to the cullin family. In terms of assembly, component of the Cul9-RING complex consisting of CUL9 and RBX1; the CUL9-RBX1 complex is a heterododecamer composed of six CUL9 and six RBX1 protomers. Interacts (via C-terminal TRIAD/RBR supradomain) with E2 ubiquitin-conjugating enzyme UBE2L3. Interacts with CUL7; the interaction with the CUL7 component of the 3M complex leads to inhibition of CUL9 activity. The CUL7-CUL9 heterodimer seems to interact specifically with TP53, likely via the CPH domain. Forms a complex with p53/TP53 in the cytoplasm of unstressed cells. Interacts with UBCH7 and UBCH8. Autoubiquitinated by the CUL9-RBX1 complex at Lys-87. In terms of processing, neddylated. Neddylation is mediated by E1 enzyme UBA3-NAE1 complex and E2 enzyme UBE2F. Structural rearrangment of the C-terminal TRIAD/RBR supradomain may play a role in neddylation and deneddylation. As to expression, ubiquitously expressed in all tissues with highest expression in testis brain and kidney.

Its subcellular location is the cytoplasm. In terms of biological role, core component of a Cul9-RING ubiquitin-protein ligase complex composed of CUL9 and RBX1. The CUL9-RBX1 complex mediates ubiquitination and subsequent degradation of BIRC5 and is required to maintain microtubule dynamics and genome integrity. Acts downstream of the 3M complex, which inhibits the ubiquitination of BIRC5. The CUL9-RBX1 complex also mediates mono-ubiquitination of p53/TP53. Acts as a cytoplasmic anchor protein in p53/TP53-associated protein complex. Regulates the subcellular localization of p53/TP53 and its subsequent function. Ubiquitinates apurinic/apyrimidinic endodeoxyribonuclease APEX2. Ubiquitination by the CUL9-RBX1 complex is predominantly mediated by E2 ubiquitin-conjugating enzymes UBE2L3 and UBE2D2. The chain is Cullin-9 (CUL9) from Homo sapiens (Human).